A 102-amino-acid polypeptide reads, in one-letter code: Small ribosomal subunit protein bS18c (102 aa).

Belongs to the bacterial ribosomal protein bS18 family. In terms of assembly, part of the 30S ribosomal subunit.

The protein localises to the plastid. Its subcellular location is the chloroplast. This chain is Small ribosomal subunit protein bS18c, found in Phaseolus vulgaris (Kidney bean).